Consider the following 203-residue polypeptide: Large ribosomal subunit protein uL18 (203 aa).

This sequence belongs to the universal ribosomal protein uL18 family. In terms of assembly, part of the 50S ribosomal subunit. Contacts the 5S and 23S rRNAs.

In terms of biological role, this is one of the proteins that bind and probably mediate the attachment of the 5S RNA into the large ribosomal subunit, where it forms part of the central protuberance. In Pyrococcus horikoshii (strain ATCC 700860 / DSM 12428 / JCM 9974 / NBRC 100139 / OT-3), this protein is Large ribosomal subunit protein uL18.